Consider the following 214-residue polypeptide: MSCRERTDSSCGCNGHEENRILKCVVVGDGAVGKTCLLMSYANDAFPEEYVPTVFDHYAVTVTVGGKQHLLGLYDTAGQEDYNQLRPLSYPNTDVFLICFSVVNPASYHNVQEEWVPELKDCMPHVPYVLIGTQIDLRDDPKTLARLLYMKEKPLTYEHGVKLAKAIGAQCYLECSALTQKGLKAVFDEAILTIFHPKKKKKGCLGCHGCCAII.

Residues Cys3 and Cys11 are each lipidated (S-palmitoyl cysteine). GTP is bound by residues Ala31–Cys36, Phe46–Thr53, Asp75–Gln79, Thr133–Asp136, and Ala177–Leu178. The short motif at Tyr50–Tyr58 is the Effector region element. Cysteine methyl ester is present on Cys211. Cys211 carries S-farnesyl cysteine lipidation. Positions Ala212–Ile214 are cleaved as a propeptide — removed in mature form.

The protein belongs to the small GTPase superfamily. Rho family. In terms of assembly, interacts with the CRIB domains of proteins such as Pak1 and Was/Wasp. Interacts with GLUL. Post-translationally, palmitoylated; regulates localization to the plasma membrane and may be mediated by GLUL. As to expression, highly expressed in heart with moderate levels in lung and liver. Very low levels detected in brain, spleen, skeletal muscle, kidney and testis.

It localises to the cell membrane. Its function is as follows. Plasma membrane-associated small GTPase specifically involved in angiogenesis. Required for endothelial cell migration during vascular development via its interaction with GLUL. Elicits the formation of F-actin-rich structures, thereby regulating endothelial cell migration. This chain is Rho-related GTP-binding protein RhoJ (Rhoj), found in Mus musculus (Mouse).